The chain runs to 354 residues: Nicotinate-nucleotide--dimethylbenzimidazole phosphoribosyltransferase (354 aa).

Residue Glu319 is the Proton acceptor of the active site.

Belongs to the CobT family.

It carries out the reaction 5,6-dimethylbenzimidazole + nicotinate beta-D-ribonucleotide = alpha-ribazole 5'-phosphate + nicotinate + H(+). It participates in nucleoside biosynthesis; alpha-ribazole biosynthesis; alpha-ribazole from 5,6-dimethylbenzimidazole: step 1/2. Its function is as follows. Catalyzes the synthesis of alpha-ribazole-5'-phosphate from nicotinate mononucleotide (NAMN) and 5,6-dimethylbenzimidazole (DMB). The sequence is that of Nicotinate-nucleotide--dimethylbenzimidazole phosphoribosyltransferase from Chlorobium chlorochromatii (strain CaD3).